A 347-amino-acid polypeptide reads, in one-letter code: tRNA pseudouridine synthase D (347 aa).

D81 acts as the Nucleophile in catalysis. Residues 158–304 enclose the TRUD domain; it reads GVPNYFGNQR…MRHDRRAIAL (147 aa).

Belongs to the pseudouridine synthase TruD family.

The catalysed reaction is uridine(13) in tRNA = pseudouridine(13) in tRNA. Functionally, responsible for synthesis of pseudouridine from uracil-13 in transfer RNAs. This is tRNA pseudouridine synthase D from Vibrio vulnificus (strain YJ016).